The sequence spans 249 residues: ATP synthase subunit a, chloroplastic (249 aa).

5 helical membrane passes run 40-60, 97-117, 136-156, 201-221, and 222-242; these read QVLITSWVVIAILLGSAVLVV, VPFIGTLFLFIFVSNWSGALL, INTTVALALLTSVAYFYAGLS, LVVVVLVSLVPLVVPIPVMFL, and GLFTSGIQALIFATLAAAYIG.

The protein belongs to the ATPase A chain family. F-type ATPases have 2 components, CF(1) - the catalytic core - and CF(0) - the membrane proton channel. CF(1) has five subunits: alpha(3), beta(3), gamma(1), delta(1), epsilon(1). CF(0) has four main subunits: a, b, b' and c.

It is found in the plastid. Its subcellular location is the chloroplast thylakoid membrane. Its function is as follows. Key component of the proton channel; it plays a direct role in the translocation of protons across the membrane. The chain is ATP synthase subunit a, chloroplastic from Aethionema grandiflorum (Persian stone-cress).